Here is a 353-residue protein sequence, read N- to C-terminus: DNA polymerase IV (353 aa).

The UmuC domain occupies 6 to 187; the sequence is IIHIDCDCFY…LPVTKLHGVG (182 aa). The Mg(2+) site is built by D10 and D105. E106 is an active-site residue.

The protein belongs to the DNA polymerase type-Y family. Monomer. Mg(2+) serves as cofactor.

It localises to the cytoplasm. It carries out the reaction DNA(n) + a 2'-deoxyribonucleoside 5'-triphosphate = DNA(n+1) + diphosphate. Its function is as follows. Poorly processive, error-prone DNA polymerase involved in untargeted mutagenesis. Copies undamaged DNA at stalled replication forks, which arise in vivo from mismatched or misaligned primer ends. These misaligned primers can be extended by PolIV. Exhibits no 3'-5' exonuclease (proofreading) activity. May be involved in translesional synthesis, in conjunction with the beta clamp from PolIII. This is DNA polymerase IV from Pseudomonas syringae pv. tomato (strain ATCC BAA-871 / DC3000).